Reading from the N-terminus, the 194-residue chain is Erythropoietin (194 aa).

The first 27 residues, 1 to 27 (MGARDCTPLLLLLLSFLLFPLGLPVLG), serve as a signal peptide directing secretion. 2 disulfide bridges follow: cysteine 34–cysteine 189 and cysteine 56–cysteine 60. N-linked (GlcNAc...) asparagine glycosylation is present at asparagine 51. Asparagine 65 and asparagine 110 each carry an N-linked (GlcNAc...) asparagine glycan.

It belongs to the EPO/TPO family. In terms of tissue distribution, produced by kidney or liver of adult mammals and by liver of fetal or neonatal mammals.

It is found in the secreted. Functionally, hormone involved in the regulation of erythrocyte proliferation and differentiation and the maintenance of a physiological level of circulating erythrocyte mass. Binds to EPOR leading to EPOR dimerization and JAK2 activation thereby activating specific downstream effectors, including STAT1 and STAT3. The chain is Erythropoietin (EPO) from Ovis aries (Sheep).